A 344-amino-acid chain; its full sequence is Flavonoid 7-O-methyltransferase 1B (344 aa).

Position 211 (Asp-211) interacts with S-adenosyl-L-methionine. Catalysis depends on His-249, which acts as the Proton acceptor.

The protein belongs to the class I-like SAM-binding methyltransferase superfamily. Cation-independent O-methyltransferase family. In terms of assembly, homodimer.

The catalysed reaction is scutellarein + S-adenosyl-L-methionine = scutellarein 7-methyl ether + S-adenosyl-L-homocysteine. It catalyses the reaction 4',7,8-trihydroxyflavone + S-adenosyl-L-methionine = 4',8-dihydroxy-7-methoxyflavone + S-adenosyl-L-homocysteine. It carries out the reaction isorhamnetin + S-adenosyl-L-methionine = rhamnacene + S-adenosyl-L-homocysteine + H(+). The enzyme catalyses kaempferol + S-adenosyl-L-methionine = kaempferol 7-methyl ether + S-adenosyl-L-homocysteine + H(+). The catalysed reaction is (2S)-naringenin + S-adenosyl-L-methionine = (2S)-sakuranetin + S-adenosyl-L-homocysteine + H(+). It catalyses the reaction quercetin + S-adenosyl-L-methionine = rhamnetin + S-adenosyl-L-homocysteine + H(+). It carries out the reaction apigenin + S-adenosyl-L-methionine = genkwanin + S-adenosyl-L-homocysteine + H(+). The enzyme catalyses luteolin + S-adenosyl-L-methionine = luteolin 7-methyl ether + S-adenosyl-L-homocysteine + H(+). It participates in flavonoid metabolism. Functionally, flavonoid 7-O-methyltransferase involved in the biosynthesis of polymethoxylated flavonoids natural products such as pebrellin, aroma compounds which contribute to the flavor of peppermint, and exhibit pharmacological activities such as anti-allergic, anti-oxidant, antibacterial, anti-proliferative, and anti-inflammatory effects. Catalyzes S-adenosylmethionine-dependent regioselective 7-O-methylation of flavonoids; active on various hydroxylated flavonoid substrates, including luteolin (LUT), quercetin, kaempferol, isorhamnetin, apigenin (API), scutellarein (6-hydroxy-apigenin, 6-OH-API, SCU), 7,8,4'-trihydroxy-flavone and naringenin (NAR), and, with a lower efficiency, 7,8,3',4'-tetrahydroxy-flavone, taxifolin and hesperetin. The sequence is that of Flavonoid 7-O-methyltransferase 1B from Mentha piperita (Peppermint).